The chain runs to 491 residues: Histamine H1 receptor (491 aa).

The Extracellular portion of the chain corresponds to M1–P30. N-linked (GlcNAc...) asparagine glycosylation is found at N5 and N18. Residues L31–Y51 form a helical membrane-spanning segment. Topologically, residues A52–L65 are cytoplasmic. Residues Y66–L90 form a helical membrane-spanning segment. Over M91–R98 the chain is Extracellular. A helical transmembrane segment spans residues P99 to I124. C101 and C181 are joined by a disulfide. Positions 108 and 113 each coordinate histamine. An important for agonist binding region spans residues D108–T113. The Cytoplasmic portion of the chain corresponds to D125 to A145. 2 positions are modified to phosphothreonine: T141 and T143. A helical membrane pass occupies residues S146–G165. Residues W166–T189 lie on the Extracellular side of the membrane. The helical transmembrane segment at W190–A212 threads the bilayer. A histamine-binding site is contributed by N199. Over K213–Q420 the chain is Cytoplasmic. Position 231 is a phosphoserine (S231). Disordered stretches follow at residues Q246–K297 and Q360–S385. A compositionally biased stretch (basic and acidic residues) spans P252–K262. 3 positions are modified to phosphoserine: S384, S400, and S402. A helical transmembrane segment spans residues L421 to F444. Residues F428–W432 are important for agonist binding. Y435 contributes to the histamine binding site. C445 and C448 are joined by a disulfide. The Extracellular portion of the chain corresponds to C445–N450. Residues Q451–P473 traverse the membrane as a helical segment. The Cytoplasmic portion of the chain corresponds to L474–S491.

The protein belongs to the G-protein coupled receptor 1 family. In terms of processing, phosphorylation at sites in the second and third cytoplasmic loops independently contribute to agonist-induced receptor down-regulation. As to expression, brain, lung, small intestine, uterus, adrenal medulla and spleen.

Its subcellular location is the cell membrane. Its function is as follows. G-protein-coupled receptor for histamine, a biogenic amine that functions as an immune modulator and a neurotransmitter. Through the H1 receptor, histamine mediates the contraction of smooth muscles and increases capillary permeability due to contraction of terminal venules. Also mediates neurotransmission in the central nervous system and thereby regulates circadian rhythms, emotional and locomotor activities as well as cognitive functions. The protein is Histamine H1 receptor of Bos taurus (Bovine).